We begin with the raw amino-acid sequence, 369 residues long: Uroporphyrinogen decarboxylase (369 aa).

Residues 28-32 (RQAGR), aspartate 78, tyrosine 154, serine 209, and histidine 339 contribute to the substrate site.

Belongs to the uroporphyrinogen decarboxylase family. Homodimer.

It is found in the cytoplasm. The catalysed reaction is uroporphyrinogen III + 4 H(+) = coproporphyrinogen III + 4 CO2. Its pathway is porphyrin-containing compound metabolism; protoporphyrin-IX biosynthesis; coproporphyrinogen-III from 5-aminolevulinate: step 4/4. Its function is as follows. Catalyzes the decarboxylation of four acetate groups of uroporphyrinogen-III to yield coproporphyrinogen-III. The sequence is that of Uroporphyrinogen decarboxylase from Polaromonas sp. (strain JS666 / ATCC BAA-500).